Reading from the N-terminus, the 423-residue chain is WD repeat and SOCS box-containing protein 1 (423 aa).

The disordered stretch occupies residues 76-100 (DRSSGAGPRRLSRQNSEGSLLPGEP). WD repeat units follow at residues 125-166 (SRCV…LLLN), 169-209 (DHTD…NMVK), 213-252 (GHQN…LIRK), 255-294 (GHHN…VLLE), and 310-347 (ANDR…KSPQ). Residues 373–423 (DGSVHFWASPRSIASLQHLCRMTLRRVMPTQQVYTLPIPFSMQDYLAYKTL) form the SOCS box domain.

In terms of assembly, component of a probable ECS E3 ubiquitin-protein ligase complex that contains the Elongin BC complex.

The protein operates within protein modification; protein ubiquitination. Functionally, probable substrate-recognition component of a SCF-like ECS (Elongin-Cullin-SOCS-box protein) E3 ubiquitin-protein ligase complex which mediates the ubiquitination and subsequent proteasomal degradation of target proteins. The polypeptide is WD repeat and SOCS box-containing protein 1 (wsb1) (Danio rerio (Zebrafish)).